Here is a 98-residue protein sequence, read N- to C-terminus: Large ribosomal subunit protein uL23 (98 aa).

Belongs to the universal ribosomal protein uL23 family. As to quaternary structure, part of the 50S ribosomal subunit. Contacts protein L29, and trigger factor when it is bound to the ribosome.

Functionally, one of the early assembly proteins it binds 23S rRNA. One of the proteins that surrounds the polypeptide exit tunnel on the outside of the ribosome. Forms the main docking site for trigger factor binding to the ribosome. The protein is Large ribosomal subunit protein uL23 of Methylobacterium radiotolerans (strain ATCC 27329 / DSM 1819 / JCM 2831 / NBRC 15690 / NCIMB 10815 / 0-1).